The sequence spans 295 residues: Lipase 2 (295 aa).

The first 31 residues, 1–31 (MPKPALRRVMTATVAAVGTLALGLTDATAHA), serve as a signal peptide directing secretion. The Nucleophile role is filled by Ser48. 3 cysteine pairs are disulfide-bonded: Cys65–Cys89, Cys138–Cys152, and Cys205–Cys254. His275 is a catalytic residue.

It belongs to the 'GDSL' lipolytic enzyme family. In terms of assembly, monomer.

The protein resides in the secreted. The catalysed reaction is a triacylglycerol + H2O = a diacylglycerol + a fatty acid + H(+). Its activity is regulated as follows. Strongly inhibited by Ag(+). The cations Ca(2+) and Mg(2+) do not significantly reduce the lipolytic activity of SCO7513, whereas high concentrations of Co(2+) and Cu(2+) partially inhibit it. Is not inhibited by DTT in vitro. Is resistant to PMSF inhibition, except in the presence of Ca(2+). In terms of biological role, catalyzes the hydrolysis of fatty acid esters with a preference for long chain fatty acids (C16-C18). This is Lipase 2 from Streptomyces coelicolor (strain ATCC BAA-471 / A3(2) / M145).